Consider the following 349-residue polypeptide: Hydroxymethylglutaryl-CoA synthase (349 aa).

Positions 29 and 30 each coordinate (3S)-3-hydroxy-3-methylglutaryl-CoA. Glutamate 81 acts as the Proton donor/acceptor in catalysis. (3S)-3-hydroxy-3-methylglutaryl-CoA is bound by residues cysteine 113 and threonine 154. The active-site Acyl-thioester intermediate is cysteine 113. Position 202 (arginine 202) interacts with CoA. Residues threonine 204 and histidine 237 each contribute to the (3S)-3-hydroxy-3-methylglutaryl-CoA site. Residue histidine 237 is the Proton donor/acceptor of the active site. Lysine 242 contributes to the CoA binding site. Positions 246, 269, and 299 each coordinate (3S)-3-hydroxy-3-methylglutaryl-CoA.

It belongs to the thiolase-like superfamily. Archaeal HMG-CoA synthase family. Interacts with acetoacetyl-CoA thiolase that catalyzes the precedent step in the pathway and with a DUF35 protein. The acetoacetyl-CoA thiolase/HMG-CoA synthase complex channels the intermediate via a fused CoA-binding site, which allows for efficient coupling of the endergonic thiolase reaction with the exergonic HMGCS reaction.

The catalysed reaction is acetoacetyl-CoA + acetyl-CoA + H2O = (3S)-3-hydroxy-3-methylglutaryl-CoA + CoA + H(+). The protein operates within metabolic intermediate biosynthesis; (R)-mevalonate biosynthesis; (R)-mevalonate from acetyl-CoA: step 2/3. Catalyzes the condensation of acetyl-CoA with acetoacetyl-CoA to form 3-hydroxy-3-methylglutaryl-CoA (HMG-CoA). Functions in the mevalonate (MVA) pathway leading to isopentenyl diphosphate (IPP), a key precursor for the biosynthesis of isoprenoid compounds that are building blocks of archaeal membrane lipids. The protein is Hydroxymethylglutaryl-CoA synthase of Methanosarcina acetivorans (strain ATCC 35395 / DSM 2834 / JCM 12185 / C2A).